We begin with the raw amino-acid sequence, 100 residues long: ATP-dependent Clp protease adapter protein ClpS (100 aa).

This sequence belongs to the ClpS family. As to quaternary structure, binds to the N-terminal domain of the chaperone ClpA.

Functionally, involved in the modulation of the specificity of the ClpAP-mediated ATP-dependent protein degradation. In Corynebacterium glutamicum (strain R), this protein is ATP-dependent Clp protease adapter protein ClpS.